Here is a 606-residue protein sequence, read N- to C-terminus: Elongation factor 4 (606 aa).

Residues 10–192 (IRKKNFCIIA…AICKYVPSPR (183 aa)) form the tr-type G domain. Residues 22–27 (DHGKST) and 139–142 (NKID) each bind GTP.

The protein belongs to the TRAFAC class translation factor GTPase superfamily. Classic translation factor GTPase family. LepA subfamily.

Its subcellular location is the cell inner membrane. It carries out the reaction GTP + H2O = GDP + phosphate + H(+). Its function is as follows. Required for accurate and efficient protein synthesis under certain stress conditions. May act as a fidelity factor of the translation reaction, by catalyzing a one-codon backward translocation of tRNAs on improperly translocated ribosomes. Back-translocation proceeds from a post-translocation (POST) complex to a pre-translocation (PRE) complex, thus giving elongation factor G a second chance to translocate the tRNAs correctly. Binds to ribosomes in a GTP-dependent manner. This is Elongation factor 4 from Borreliella burgdorferi (strain ATCC 35210 / DSM 4680 / CIP 102532 / B31) (Borrelia burgdorferi).